The following is a 260-amino-acid chain: UPF0246 protein Tola_0968 (260 aa).

It belongs to the UPF0246 family.

This chain is UPF0246 protein Tola_0968, found in Tolumonas auensis (strain DSM 9187 / NBRC 110442 / TA 4).